The sequence spans 468 residues: Trehalose-binding lipoprotein LpqY (468 aa).

Residues 1-25 (MVMSRGRIPRLGAAVLVALTTAAAA) form the signal peptide. The N-palmitoyl cysteine moiety is linked to residue C26. A lipid anchor (S-diacylglycerol cysteine) is attached at C26. C54 and C372 form a disulfide bridge. Positions 97, 151, 276, 278, 351, and 421 each coordinate alpha,alpha-trehalose.

The protein belongs to the bacterial solute-binding protein 1 family. As to quaternary structure, monomer. The complex is composed of two ATP-binding proteins (SugC), two transmembrane proteins (SugA and SugB) and a solute-binding protein (LpqY).

The protein localises to the cell inner membrane. Functionally, part of the ABC transporter complex LpqY-SugA-SugB-SugC, which is highly specific for uptake of trehalose. Involved in the recycling of extracellular trehalose released from trehalose-containing molecules synthesized by M.tuberculosis. Trehalose uptake is essential for virulence. The polypeptide is Trehalose-binding lipoprotein LpqY (lpqY) (Mycobacterium tuberculosis (strain CDC 1551 / Oshkosh)).